The following is a 496-amino-acid chain: MDRMKKIKRQLSMTLRGGRGIDKTNGAPEQIGLDESGGGGGSDPGEAPTRAAPGELRSARGPLSSAPEIVHEDLKMGSDGESDQASATSSDEVQSPVRVRMRNHPPRKISTEDINKRLSLPADIRLPEGYLEKLTLNSPIFDKPLSRRLRRVSLSEIGFGKLETYIKLDKLGEGTYATVYKGKSKLTDNLVALKEIRLEHEEGAPCTAIREVSLLKDLKHANIVTLHDIIHTEKSLTLVFEYLDKDLKQYLDDCGNIINMHNVKLFLFQLLRGLAYCHRQKVLHRDLKPQNLLINERGELKLADFGLARAKSIPTKTYSNEVVTLWYRPPDILLGSTDYSTQIDMWGVGCIFYEMATGRPLFPGSTVEEQLHFIFRILGTPTEETWPGILSNEEFKTYNYPKYRAEALLSHAPRLDSDGADLLTKLLQFEGRNRISAEDAMKHPFFLSLGERIHKLPDTTSIFALKEIQLQKEASLRSSSMPDSGRPAFRVVDTEF.

A disordered region spans residues M1 to V97. S12 is modified (phosphoserine; by BRSK2). Phosphoserine occurs at positions 36, 42, 64, 65, 78, 82, and 89. A compositionally biased stretch (basic and acidic residues) spans I69 to S78. Over residues D83–V93 the composition is skewed to polar residues. Position 95 is a phosphoserine; by CDK5 (S95). S110, S119, S138, S146, S153, and S155 each carry phosphoserine. The Protein kinase domain occupies Y165–F446. ATP is bound by residues L171 to V179 and K194. T175 bears the Phosphothreonine mark. The active-site Proton acceptor is the D286. Residue T380 is modified to Phosphothreonine. Phosphoserine occurs at positions 391, 478, and 480.

This sequence belongs to the protein kinase superfamily. CMGC Ser/Thr protein kinase family. CDC2/CDKX subfamily. Found in a complex containing CABLES1, CDK17 and TDRD7. Interacts with BRSK2. Identified in a complex with NSF, syntaxin-1, synaptotagmin, SYN1, SYP and CDK5R1. Interacts with YWHAH, YWHAQ and YWHAZ. Interacts with CCNY; this interaction increases the CDK16 kinase activity. Interacts with CCNYL1; this interaction mutually increases the stability of CDK16 and CCNYL1 and increases the kinase activity of CDK16. Interacts with NSF. Post-translationally, phosphorylation of CDK16 is essential for the binding of CCNY, but also essential for the regulation of CDK16 kinase activity. Phosphorylation of CDK16 is essential for the binding of CCNYl1, but also essential for the regulation of CDK16 kinase activity. Ser-146 and Ser-153 are the most critical sites for the binding of CCNYL1 and for modulating CDK16 kinase activity. Phosphorylation at Ser-153 inhibits kinase activity. In terms of tissue distribution, detected in pancreas islets (at protein level). Detected in brain and pancreas.

It localises to the cytoplasm. It is found in the cytoplasmic vesicle. The protein localises to the secretory vesicle. Its subcellular location is the cell membrane. The protein resides in the synapse. It localises to the synaptosome. The enzyme catalyses L-seryl-[protein] + ATP = O-phospho-L-seryl-[protein] + ADP + H(+). It carries out the reaction L-threonyl-[protein] + ATP = O-phospho-L-threonyl-[protein] + ADP + H(+). Its function is as follows. Protein kinase that plays a role in vesicle-mediated transport processes and exocytosis. Regulates GH1 release by brain neurons. Phosphorylates NSF, and thereby regulates NSF oligomerization. Required for normal spermatogenesis. Regulates neuron differentiation and dendrite development. Plays a role in the regulation of insulin secretion in response to changes in blood glucose levels. Can phosphorylate CCNY at 'Ser-336' (in vitro). The protein is Cyclin-dependent kinase 16 (CDK16) of Homo sapiens (Human).